We begin with the raw amino-acid sequence, 94 residues long: Acylphosphatase (94 aa).

In terms of domain architecture, Acylphosphatase-like spans 8 to 94 (ALHVIVKGRV…RGYTDFRIEV (87 aa)). Catalysis depends on residues R23 and N41.

This sequence belongs to the acylphosphatase family.

The enzyme catalyses an acyl phosphate + H2O = a carboxylate + phosphate + H(+). The polypeptide is Acylphosphatase (acyP) (Treponema denticola (strain ATCC 35405 / DSM 14222 / CIP 103919 / JCM 8153 / KCTC 15104)).